Reading from the N-terminus, the 461-residue chain is MIPRLMCTQHPDATVKVTANEEVDEALVAYTAYGCDEVMIDYEGKTTPYSQPKDITVKAYEAGLPLGEKFFLTPRMPNPRLEEFERSMLTLEAAILANYFSVKLMGRQAIRWIVLPMVTDIETLGLVYRMLLHKTEAYIKETGVKLEPPELIPLIEDAIAQLKADELISGLLKQMAQQPQYIRLFLGKSDSAVRHGHLASALAIVATLSKMRSVEKSLGIKIYPILGMGSPPFRGGINNPSLSHLETIQYVGYYTVTVQSAVRYDTSYDEYIKVRETILNACCLPSREINLPELEEIITKASSTYKSVVVKFADRIVQMARLIPGTRDRISWTVYGRNITAEDRVVNMPRAIVYTSAWYAMGLPPTFLDAPTVVELAKSDKLDLVLKALPSLRREWEYDAQFYDPQVASRYTSEDFVKVVNEMLDYLGINLRANGTYLSLLRMNRNESNILAMGKYRKFLG.

Belongs to the PEPCase type 2 family. As to quaternary structure, homotetramer. It depends on Mg(2+) as a cofactor.

It carries out the reaction oxaloacetate + phosphate = phosphoenolpyruvate + hydrogencarbonate. Functionally, catalyzes the irreversible beta-carboxylation of phosphoenolpyruvate (PEP) to form oxaloacetate (OAA), a four-carbon dicarboxylic acid source for the tricarboxylic acid cycle. The polypeptide is Phosphoenolpyruvate carboxylase (Pyrobaculum islandicum (strain DSM 4184 / JCM 9189 / GEO3)).